Consider the following 222-residue polypeptide: UPF0502 protein XCV4380 (222 aa).

The protein belongs to the UPF0502 family.

The sequence is that of UPF0502 protein XCV4380 from Xanthomonas euvesicatoria pv. vesicatoria (strain 85-10) (Xanthomonas campestris pv. vesicatoria).